Reading from the N-terminus, the 74-residue chain is ATP synthase subunit c (74 aa).

Transmembrane regions (helical) follow at residues 8–28 (FIGI…VSNI) and 52–72 (IGAG…MLLI).

It belongs to the ATPase C chain family. As to quaternary structure, F-type ATPases have 2 components, F(1) - the catalytic core - and F(0) - the membrane proton channel. F(1) has five subunits: alpha(3), beta(3), gamma(1), delta(1), epsilon(1). F(0) has three main subunits: a(1), b(2) and c(10-14). The alpha and beta chains form an alternating ring which encloses part of the gamma chain. F(1) is attached to F(0) by a central stalk formed by the gamma and epsilon chains, while a peripheral stalk is formed by the delta and b chains.

It localises to the cell inner membrane. Functionally, f(1)F(0) ATP synthase produces ATP from ADP in the presence of a proton or sodium gradient. F-type ATPases consist of two structural domains, F(1) containing the extramembraneous catalytic core and F(0) containing the membrane proton channel, linked together by a central stalk and a peripheral stalk. During catalysis, ATP synthesis in the catalytic domain of F(1) is coupled via a rotary mechanism of the central stalk subunits to proton translocation. In terms of biological role, key component of the F(0) channel; it plays a direct role in translocation across the membrane. A homomeric c-ring of between 10-14 subunits forms the central stalk rotor element with the F(1) delta and epsilon subunits. The sequence is that of ATP synthase subunit c from Rickettsia prowazekii (strain Madrid E).